A 416-amino-acid polypeptide reads, in one-letter code: Peptide chain release factor subunit 1 (416 aa).

Belongs to the eukaryotic release factor 1 family. Heterodimer of two subunits, one of which binds GTP.

The protein localises to the cytoplasm. Directs the termination of nascent peptide synthesis (translation) in response to the termination codons UAA, UAG and UGA. This Halorubrum lacusprofundi (strain ATCC 49239 / DSM 5036 / JCM 8891 / ACAM 34) protein is Peptide chain release factor subunit 1.